We begin with the raw amino-acid sequence, 260 residues long: Thiamine thiazole synthase (260 aa).

NAD(+) contacts are provided by residues Ser41, Glu60–Arg61, Gly68, Val131, and His159–Asp161. Positions 161 and 176 each coordinate Fe cation. Met225 is a binding site for NAD(+). Arg235 contributes to the glycine binding site.

The protein belongs to the THI4 family. In terms of assembly, homooctamer; tetramer of dimers. Fe(2+) serves as cofactor.

It catalyses the reaction hydrogen sulfide + glycine + NAD(+) = ADP-5-ethyl-4-methylthiazole-2-carboxylate + nicotinamide + 3 H2O + H(+). It functions in the pathway cofactor biosynthesis; thiamine diphosphate biosynthesis. Involved in the biosynthesis of the thiazole moiety of thiamine. Catalyzes the conversion of NAD and glycine to adenosine diphosphate 5-(2-hydroxyethyl)-4-methylthiazole-2-carboxylate (ADT), an adenylated thiazole intermediate, using free sulfide as a source of sulfur. This Archaeoglobus fulgidus (strain ATCC 49558 / DSM 4304 / JCM 9628 / NBRC 100126 / VC-16) protein is Thiamine thiazole synthase.